The chain runs to 660 residues: MRLSVSLGLASLWTAIGATALNVSQTNSSITLANDRLTAIFSNAGKVVDLYLDGQDLLGPASGSTGVGPYLDCYCTPKGFYTAGSTTPRMEVVQGTDATGTQYAGVILNDTYTPTGQQFQQYWFLRDGETGLHMFSRLAYYNETTPFLRNLQEFRTLFRPNTDLWTHLTSSELQTAPLPSDEAVGKQVVVQDATWRFNNTPNDAYYTQFSEYFTKYTFSNAWRDNNVHGLYADGSTSNGTTFGAWLVMNTKDTYYGGPLHSDLTVDGIVYNYIVSNHHGEGTPNITNGFDRTFGPQFYLFNGGGSSSLNELRSEAESLADPSWNVEFYDSIAKHVVGYVPSSKRGSVQGQIKLPRGATRPIAILTVDGQYFQDNSVDPRSYQYWVEMDANGKFQLDHVVEGKYRLTVYADGIFGDYVRDGVQVRGRKTTRINDSWQPESAGVEVWRLGTPDKSSGEFLHGVARDPTHPLHPPEYLIYWGAYDWQQDFPNGVNYTIGSSDPATDFNTVHWSVFGPTPDNPDVEYDTTHDWAINFSLTKKQLQKRKTATLTIQLAGAKTASGNTDVYKPDEPYTNLALESYINQQEEPLTMLIGFNQSSSCIVRSAVSCYQVRSRMTFPADWLQVGSNTLTLHLPRNATDVEDAILPGTVYVQYDALRLELS.

Residues 1 to 20 form the signal peptide; that stretch reads MRLSVSLGLASLWTAIGATA. 11 N-linked (GlcNAc...) asparagine glycosylation sites follow: N22, N27, N109, N142, N238, N284, N432, N492, N532, N594, and N635.

Belongs to the polysaccharide lyase 4 family.

Its subcellular location is the secreted. It catalyses the reaction Endotype eliminative cleavage of L-alpha-rhamnopyranosyl-(1-&gt;4)-alpha-D-galactopyranosyluronic acid bonds of rhamnogalacturonan I domains in ramified hairy regions of pectin leaving L-rhamnopyranose at the reducing end and 4-deoxy-4,5-unsaturated D-galactopyranosyluronic acid at the non-reducing end.. In terms of biological role, pectinolytic enzymes consist of four classes of enzymes: pectin lyase, polygalacturonase, pectin methylesterase and rhamnogalacturonase. Degrades the rhamnogalacturonan I (RG-I) backbone of pectin. This is Probable rhamnogalacturonate lyase B (rglB) from Aspergillus terreus (strain NIH 2624 / FGSC A1156).